A 76-amino-acid polypeptide reads, in one-letter code: MRTFAFLTAMLLLVALHAQAEARQARADEAAIQEQPGADDQGMAHSFTRNESAVLPLSESERGLRCICLLGICRLL.

The first 22 residues, 1–22 (MRTFAFLTAMLLLVALHAQAEA), serve as a signal peptide directing secretion. The propeptide occupies 23 to 64 (RQARADEAAIQEQPGADDQGMAHSFTRNESAVLPLSESERGL). Arg-65 is covalently cross-linked (Cyclopeptide (Arg-Cys) (interchain with C-73 in subunit A); in form BTD-4). Cys-68 and Cys-73 are joined by a disulfide. A Cyclopeptide (Cys-Arg) (interchain with R-65 in subunit A); in form BTD-4 cross-link involves residue Cys-73. Positions 74-76 (RLL) are excised as a propeptide.

This sequence belongs to the alpha-defensin family. Theta subfamily. As to quaternary structure, BTD-4 is a cyclic heterodimer composed of subunits A and C; disulfide-linked. In terms of processing, forms a cyclic peptide with subunit A (BTD-4). An additional intersubunit disulfide bond is formed.

In terms of biological role, BTD-4 has antimicrobial activity against the Gram-negative bacterium E.coli ML35, the Gram-positive bacterium S.aureus 502a, and the fungus C.albicans 16820. In Papio anubis (Olive baboon), this protein is Theta defensin subunit C (BTDC).